Here is a 186-residue protein sequence, read N- to C-terminus: Peptidyl-tRNA hydrolase (186 aa).

Tyrosine 14 lines the tRNA pocket. Catalysis depends on histidine 19, which acts as the Proton acceptor. The tRNA site is built by tyrosine 64, asparagine 66, and asparagine 112.

This sequence belongs to the PTH family. In terms of assembly, monomer.

The protein localises to the cytoplasm. The enzyme catalyses an N-acyl-L-alpha-aminoacyl-tRNA + H2O = an N-acyl-L-amino acid + a tRNA + H(+). Hydrolyzes ribosome-free peptidyl-tRNAs (with 1 or more amino acids incorporated), which drop off the ribosome during protein synthesis, or as a result of ribosome stalling. Its function is as follows. Catalyzes the release of premature peptidyl moieties from peptidyl-tRNA molecules trapped in stalled 50S ribosomal subunits, and thus maintains levels of free tRNAs and 50S ribosomes. This is Peptidyl-tRNA hydrolase from Lachnospira eligens (strain ATCC 27750 / DSM 3376 / VPI C15-48 / C15-B4) (Eubacterium eligens).